We begin with the raw amino-acid sequence, 695 residues long: GATA zinc finger domain-containing protein 16 (695 aa).

3 disordered regions span residues 82-111 (SPIL…SNNA), 134-304 (VVNS…QQDK), and 422-472 (NNQF…KMRY). Composition is skewed to low complexity over residues 87 to 111 (SQQQ…SNNA) and 140 to 149 (KTTTTNNKPP). Residues 150-174 (KQSKRKEKERLEEEKQTVAQQQQYQ) are a coiled coil. The segment covering 155 to 165 (KEKERLEEEKQ) has biased composition (basic and acidic residues). Residues 199–209 (VSTTPYGNSQF) show a composition bias toward polar residues. Residues 210–298 (NNNNNNNNNN…NSNSNNNNNN (89 aa)) are compositionally biased toward low complexity. Residues 422–433 (NNQFSGDKQSAL) show a composition bias toward polar residues. The span at 434–446 (NNVKNSKGGNTNN) shows a compositional bias: low complexity. The GATA-type zinc finger occupies 479–504 (CHTCGVTNTPEWRRGPNGAKTLCNAC). Positions 523-646 (NSTGVNITEP…TTNSITTPTT (124 aa)) are disordered. 2 stretches are compositionally biased toward low complexity: residues 544-556 (DNNN…SDSN) and 564-646 (GSNN…TPTT).

In Dictyostelium discoideum (Social amoeba), this protein is GATA zinc finger domain-containing protein 16 (gtaP).